We begin with the raw amino-acid sequence, 732 residues long: Catalase-peroxidase (732 aa).

Positions 96-219 form a cross-link, tryptophyl-tyrosyl-methioninium (Trp-Tyr) (with M-245); sequence WHSAGTYRIG…LGAVQMGLIY (124 aa). His-97 (proton acceptor) is an active-site residue. The segment at residues 219-245 is a cross-link (tryptophyl-tyrosyl-methioninium (Tyr-Met) (with W-96)); that stretch reads YVNPEGPNGHPDPVASGRDIRETFGRM. A heme b-binding site is contributed by His-260.

Belongs to the peroxidase family. Peroxidase/catalase subfamily. In terms of assembly, homodimer or homotetramer. It depends on heme b as a cofactor. Formation of the three residue Trp-Tyr-Met cross-link is important for the catalase, but not the peroxidase activity of the enzyme.

It catalyses the reaction H2O2 + AH2 = A + 2 H2O. The enzyme catalyses 2 H2O2 = O2 + 2 H2O. In terms of biological role, bifunctional enzyme with both catalase and broad-spectrum peroxidase activity. This chain is Catalase-peroxidase, found in Acaryochloris marina (strain MBIC 11017).